Here is a 291-residue protein sequence, read N- to C-terminus: 3-hydroxy-5-phosphonooxypentane-2,4-dione thiolase (291 aa).

Lys203 (schiff-base intermediate with substrate) is an active-site residue.

It belongs to the DeoC/FbaB aldolase family. In terms of assembly, homodecamer.

It is found in the cytoplasm. It carries out the reaction dihydroxyacetone phosphate + acetyl-CoA = 3-hydroxy-2,4-dioxopentyl phosphate + CoA. Involved in the degradation of phospho-AI-2, thereby terminating induction of the lsr operon and closing the AI-2 signaling cycle. Catalyzes the transfer of an acetyl moiety from 3-hydroxy-5-phosphonooxypentane-2,4-dione to CoA to form glycerone phosphate and acetyl-CoA. The polypeptide is 3-hydroxy-5-phosphonooxypentane-2,4-dione thiolase (Yersinia pseudotuberculosis serotype O:1b (strain IP 31758)).